The following is a 434-amino-acid chain: Cytochrome P450 144 (434 aa).

Residues D124 and H128 each coordinate substrate. Positions 132, 326, 383, and 385 each coordinate heme.

It belongs to the cytochrome P450 family. Monomer. Requires heme as cofactor.

This is Cytochrome P450 144 (cyp144) from Mycobacterium tuberculosis (strain CDC 1551 / Oshkosh).